Here is a 78-residue protein sequence, read N- to C-terminus: Defensin-like protein 171 (78 aa).

The N-terminal stretch at 1-23 is a signal peptide; it reads MAKTASSLVLPIIFLVMFALVEQ. Intrachain disulfides connect Cys-27–Cys-71, Cys-34–Cys-56, Cys-40–Cys-65, and Cys-44–Cys-67.

It belongs to the DEFL family.

It localises to the secreted. The chain is Defensin-like protein 171 (LCR61) from Arabidopsis thaliana (Mouse-ear cress).